The primary structure comprises 67 residues: Large ribosomal subunit protein uL29 (67 aa).

It belongs to the universal ribosomal protein uL29 family.

The sequence is that of Large ribosomal subunit protein uL29 from Rubrobacter xylanophilus (strain DSM 9941 / JCM 11954 / NBRC 16129 / PRD-1).